A 36-amino-acid polypeptide reads, in one-letter code: Omega-agatoxin-Aa1b (36 aa).

The protein belongs to the neurotoxin 04 (omega-agtx) family. 01 (type I omega-agtx) subfamily. In terms of tissue distribution, expressed by the venom gland.

It is found in the secreted. In terms of biological role, omega-agatoxin are antagonist of voltage-gated calcium channels. They block insect neuromuscular transmission presynaptically. This toxin is a blocker of L-type calcium channels (Cav/CACNA1). The chain is Omega-agatoxin-Aa1b from Agelenopsis aperta (North American funnel-web spider).